We begin with the raw amino-acid sequence, 463 residues long: MDKKHILCFLVLLPLNMALISAESEEGVNQTDLGVTRNKIMTAQYECYQKIMQDPIQQAEGLYCNRTWDGWLCWNDVAAGTESMQYCPDYFQDFDPSEKVTKICDQDGHWFRHPDSNRTWTNYTLCNNSTHEKVKTALNLFYLTIIGHGLSIASLIISLIIFFYFKSLSCQRITLHKNLFFSFICNSIVTIIHLTAVANNQALVATNPVSCKVSQFIHLYLMGCNYFWMLCEGVYLHTLIVVAVFAEKQHLMWYYFLGWGFPLLPACIHAIARSLYYNDNCWISSDTHLLYIIHGPICAALLVNLFFLLNIVRVLITKLKVTHQVESNLYMKAVRATLILVPLLGIEFVLFPWRPEGKVAEEVYDYVMHILMHFQGLLVATIFCFFNGEVQAILRRNWNQYKIQFGNGFSHSDALRSASYTVSTISDMQGYSHDCPTEHLNGKSIQDIENVALKSENMYDLVM.

The N-terminal stretch at 1–22 (MDKKHILCFLVLLPLNMALISA) is a signal peptide. Over 23 to 138 (ESEEGVNQTD…STHEKVKTAL (116 aa)) the chain is Extracellular. N-linked (GlcNAc...) asparagine glycosylation is found at N29, N65, N117, N122, N127, and N128. 3 disulfide bridges follow: C47–C73, C64–C104, and C87–C126. Residues 139–163 (NLFYLTIIGHGLSIASLIISLIIFF) traverse the membrane as a helical segment. Residues 164 to 174 (YFKSLSCQRIT) are Cytoplasmic-facing. Residues 175–197 (LHKNLFFSFICNSIVTIIHLTAV) traverse the membrane as a helical segment. The Extracellular segment spans residues 198–208 (ANNQALVATNP). The chain crosses the membrane as a helical span at residues 209-237 (VSCKVSQFIHLYLMGCNYFWMLCEGVYLH). Over 238-251 (TLIVVAVFAEKQHL) the chain is Cytoplasmic. Residues 252 to 272 (MWYYFLGWGFPLLPACIHAIA) form a helical membrane-spanning segment. The Extracellular segment spans residues 273–288 (RSLYYNDNCWISSDTH). Positions 287–288 (TH) are required for RAMP3 interaction. Residues 289 to 313 (LLYIIHGPICAALLVNLFFLLNIVR) form a helical membrane-spanning segment. The Cytoplasmic segment spans residues 314–328 (VLITKLKVTHQVESN). Residues 329-350 (LYMKAVRATLILVPLLGIEFVL) form a helical membrane-spanning segment. Topologically, residues 351 to 365 (FPWRPEGKVAEEVYD) are extracellular. Residues 366–386 (YVMHILMHFQGLLVATIFCFF) traverse the membrane as a helical segment. Topologically, residues 387–463 (NGEVQAILRR…KSENMYDLVM (77 aa)) are cytoplasmic. A phosphoserine mark is found at S419 and S444.

The protein belongs to the G-protein coupled receptor 2 family. In terms of assembly, heterodimer of CALCRL and RAMP1; the receptor complex functions as CGRP receptor. Heterodimer of CALCRL and RAMP2 or CALCRL and RAMP3; the complexes function as adrenomedullin receptor. In terms of tissue distribution, expressed predominantly in the lung, thymus, heart and brain.

Its subcellular location is the cell membrane. In terms of biological role, g protein-coupled receptor which specificity is determined by its interaction with receptor-activity-modifying proteins (RAMPs). Together with RAMP1, form the receptor complex for calcitonin-gene-related peptides CALCA/CGRP1 and CALCB/CGRP2. Together with RAMP2 or RAMP3, function as receptor complexes for adrenomedullin (ADM and ADM2). Ligand binding causes a conformation change that triggers signaling via guanine nucleotide-binding proteins (G proteins) and modulates the activity of downstream effectors. Activates cAMP-dependent pathway. The polypeptide is Calcitonin gene-related peptide type 1 receptor (Mus musculus (Mouse)).